Here is a 167-residue protein sequence, read N- to C-terminus: Nascent polypeptide-associated complex subunit beta (167 aa).

Disordered stretches follow at residues 1–48 and 133–167; these read MDQA…GADD and QNMQ…SKVE. The segment covering 25-42 has biased composition (basic residues); that stretch reads NRNRGKGTPRRKVKKVHK. The NAC-A/B domain occupies 45–110; the sequence is GADDKKLQAT…GEEKELTELV (66 aa). Residues 148 to 161 show a composition bias toward acidic residues; it reads DEEDDIPDLVEGQD.

The protein belongs to the NAC-beta family. Part of the nascent polypeptide-associated complex (NAC), consisting of egd2 and egd1. NAC associates with ribosomes via egd1.

It is found in the cytoplasm. It localises to the nucleus. Functionally, component of the nascent polypeptide-associated complex (NAC), a dynamic component of the ribosomal exit tunnel, protecting the emerging polypeptides from interaction with other cytoplasmic proteins to ensure appropriate nascent protein targeting. The NAC complex also promotes mitochondrial protein import by enhancing productive ribosome interactions with the outer mitochondrial membrane and blocks the inappropriate interaction of ribosomes translating non-secretory nascent polypeptides with translocation sites in the membrane of the endoplasmic reticulum. EGD1 may act as a transcription factor that exert a negative effect on the expression of several genes that are transcribed by RNA polymerase II. The sequence is that of Nascent polypeptide-associated complex subunit beta (egd1) from Aspergillus terreus (strain NIH 2624 / FGSC A1156).